The following is a 66-amino-acid chain: DNA gyrase inhibitor YacG (66 aa).

Zn(2+) contacts are provided by cysteine 10, cysteine 13, cysteine 29, and cysteine 33. The disordered stretch occupies residues 46–66 (KRIPSDVQITDSDEWSDETRY). The span at 56 to 66 (DSDEWSDETRY) shows a compositional bias: acidic residues.

Belongs to the DNA gyrase inhibitor YacG family. In terms of assembly, interacts with GyrB. Requires Zn(2+) as cofactor.

Inhibits all the catalytic activities of DNA gyrase by preventing its interaction with DNA. Acts by binding directly to the C-terminal domain of GyrB, which probably disrupts DNA binding by the gyrase. The chain is DNA gyrase inhibitor YacG from Sodalis glossinidius (strain morsitans).